Reading from the N-terminus, the 80-residue chain is Conotoxin VnMSGL-0123 (80 aa).

Residues 1–20 (MSGLGIMVLTLLLLVSMATS) form the signal peptide. Residues 21-44 (HQDGGGKQATQRDAINVRRRRSIT) constitute a propeptide that is removed on maturation. Disulfide bonds link Cys-53–Cys-65, Cys-57–Cys-74, and Cys-64–Cys-78. Phe-79 is subject to Phenylalanine amide.

It belongs to the conotoxin O3 superfamily. As to expression, expressed by the venom duct.

It is found in the secreted. The polypeptide is Conotoxin VnMSGL-0123 (Conus ventricosus (Mediterranean cone)).